A 153-amino-acid polypeptide reads, in one-letter code: Large ribosomal subunit protein uL13 (153 aa).

It belongs to the universal ribosomal protein uL13 family. Part of the 50S ribosomal subunit.

In terms of biological role, this protein is one of the early assembly proteins of the 50S ribosomal subunit, although it is not seen to bind rRNA by itself. It is important during the early stages of 50S assembly. This chain is Large ribosomal subunit protein uL13, found in Azorhizobium caulinodans (strain ATCC 43989 / DSM 5975 / JCM 20966 / LMG 6465 / NBRC 14845 / NCIMB 13405 / ORS 571).